The chain runs to 296 residues: Homoserine kinase (296 aa).

An ATP-binding site is contributed by 85 to 95 (PVARGLGSSAA).

This sequence belongs to the GHMP kinase family. Homoserine kinase subfamily.

Its subcellular location is the cytoplasm. It carries out the reaction L-homoserine + ATP = O-phospho-L-homoserine + ADP + H(+). It participates in amino-acid biosynthesis; L-threonine biosynthesis; L-threonine from L-aspartate: step 4/5. Its function is as follows. Catalyzes the ATP-dependent phosphorylation of L-homoserine to L-homoserine phosphate. This chain is Homoserine kinase, found in Moorella thermoacetica (strain ATCC 39073 / JCM 9320).